Consider the following 321-residue polypeptide: Lipoyl synthase (321 aa).

7 residues coordinate [4Fe-4S] cluster: C68, C73, C79, C94, C98, C101, and S308. The Radical SAM core domain occupies 80-297 (FNHGTATFMI…KAEAMAMGFT (218 aa)).

Belongs to the radical SAM superfamily. Lipoyl synthase family. [4Fe-4S] cluster is required as a cofactor.

The protein resides in the cytoplasm. It carries out the reaction [[Fe-S] cluster scaffold protein carrying a second [4Fe-4S](2+) cluster] + N(6)-octanoyl-L-lysyl-[protein] + 2 oxidized [2Fe-2S]-[ferredoxin] + 2 S-adenosyl-L-methionine + 4 H(+) = [[Fe-S] cluster scaffold protein] + N(6)-[(R)-dihydrolipoyl]-L-lysyl-[protein] + 4 Fe(3+) + 2 hydrogen sulfide + 2 5'-deoxyadenosine + 2 L-methionine + 2 reduced [2Fe-2S]-[ferredoxin]. It functions in the pathway protein modification; protein lipoylation via endogenous pathway; protein N(6)-(lipoyl)lysine from octanoyl-[acyl-carrier-protein]: step 2/2. Functionally, catalyzes the radical-mediated insertion of two sulfur atoms into the C-6 and C-8 positions of the octanoyl moiety bound to the lipoyl domains of lipoate-dependent enzymes, thereby converting the octanoylated domains into lipoylated derivatives. This is Lipoyl synthase from Pectobacterium atrosepticum (strain SCRI 1043 / ATCC BAA-672) (Erwinia carotovora subsp. atroseptica).